A 150-amino-acid chain; its full sequence is UPF0756 membrane protein PM0771 (150 aa).

The next 4 membrane-spanning stretches (helical) occupy residues 12–34 (LVVLILLGVLSNNSSVTISAAIL), 52–72 (HGITLGIIILTIGVLSPIVSG), 79–99 (LAVFLNWKMWLAVAVGLLVAW), and 123–143 (ILGVAFVGGIPVGPLIAAGIL).

The protein belongs to the UPF0756 family.

It localises to the cell membrane. The chain is UPF0756 membrane protein PM0771 from Pasteurella multocida (strain Pm70).